The primary structure comprises 280 residues: 4-diphosphocytidyl-2-C-methyl-D-erythritol kinase (280 aa).

K9 is a catalytic residue. 93–103 (PVAAGLGGGSS) contacts ATP. Residue D135 is part of the active site.

It belongs to the GHMP kinase family. IspE subfamily.

The enzyme catalyses 4-CDP-2-C-methyl-D-erythritol + ATP = 4-CDP-2-C-methyl-D-erythritol 2-phosphate + ADP + H(+). Its pathway is isoprenoid biosynthesis; isopentenyl diphosphate biosynthesis via DXP pathway; isopentenyl diphosphate from 1-deoxy-D-xylulose 5-phosphate: step 3/6. In terms of biological role, catalyzes the phosphorylation of the position 2 hydroxy group of 4-diphosphocytidyl-2C-methyl-D-erythritol. The polypeptide is 4-diphosphocytidyl-2-C-methyl-D-erythritol kinase (Syntrophotalea carbinolica (strain DSM 2380 / NBRC 103641 / GraBd1) (Pelobacter carbinolicus)).